The chain runs to 361 residues: Flagellar P-ring protein (361 aa).

The N-terminal stretch at 1–18 (MRKFTILLMLLLASSAQA) is a signal peptide.

This sequence belongs to the FlgI family. As to quaternary structure, the basal body constitutes a major portion of the flagellar organelle and consists of four rings (L,P,S, and M) mounted on a central rod.

Its subcellular location is the periplasm. The protein resides in the bacterial flagellum basal body. Its function is as follows. Assembles around the rod to form the L-ring and probably protects the motor/basal body from shearing forces during rotation. The sequence is that of Flagellar P-ring protein from Vibrio cholerae serotype O1 (strain ATCC 39541 / Classical Ogawa 395 / O395).